A 317-amino-acid chain; its full sequence is Acetyl-coenzyme A carboxylase carboxyl transferase subunit alpha (317 aa).

Residues 33 to 294 enclose the CoA carboxyltransferase C-terminal domain; it reads NLDDEIARLQ…KQRLLEDLAD (262 aa).

This sequence belongs to the AccA family. As to quaternary structure, acetyl-CoA carboxylase is a heterohexamer composed of biotin carboxyl carrier protein (AccB), biotin carboxylase (AccC) and two subunits each of ACCase subunit alpha (AccA) and ACCase subunit beta (AccD).

The protein resides in the cytoplasm. It catalyses the reaction N(6)-carboxybiotinyl-L-lysyl-[protein] + acetyl-CoA = N(6)-biotinyl-L-lysyl-[protein] + malonyl-CoA. It functions in the pathway lipid metabolism; malonyl-CoA biosynthesis; malonyl-CoA from acetyl-CoA: step 1/1. Functionally, component of the acetyl coenzyme A carboxylase (ACC) complex. First, biotin carboxylase catalyzes the carboxylation of biotin on its carrier protein (BCCP) and then the CO(2) group is transferred by the carboxyltransferase to acetyl-CoA to form malonyl-CoA. The polypeptide is Acetyl-coenzyme A carboxylase carboxyl transferase subunit alpha (Glaesserella parasuis serovar 5 (strain SH0165) (Haemophilus parasuis)).